A 517-amino-acid chain; its full sequence is Maturase K (517 aa).

Belongs to the intron maturase 2 family. MatK subfamily.

Its subcellular location is the plastid. The protein localises to the chloroplast. Its function is as follows. Usually encoded in the trnK tRNA gene intron. Probably assists in splicing its own and other chloroplast group II introns. This chain is Maturase K, found in Paris tetraphylla.